An 88-amino-acid chain; its full sequence is Small ribosomal subunit protein uS17 (88 aa).

The protein belongs to the universal ribosomal protein uS17 family. In terms of assembly, part of the 30S ribosomal subunit.

Functionally, one of the primary rRNA binding proteins, it binds specifically to the 5'-end of 16S ribosomal RNA. This chain is Small ribosomal subunit protein uS17, found in Pseudomonas fluorescens (strain SBW25).